The sequence spans 274 residues: Nitrogenase iron protein (274 aa).

8–15 provides a ligand contact to ATP; the sequence is GKGGIGKS. Cys94 provides a ligand contact to [4Fe-4S] cluster. Arg97 bears the ADP-ribosylarginine; by dinitrogenase reductase ADP-ribosyltransferase mark. Cys131 is a [4Fe-4S] cluster binding site.

It belongs to the NifH/BchL/ChlL family. Homodimer. [4Fe-4S] cluster serves as cofactor. In terms of processing, the reversible ADP-ribosylation of Arg-97 inactivates the nitrogenase reductase and regulates nitrogenase activity.

It catalyses the reaction N2 + 8 reduced [2Fe-2S]-[ferredoxin] + 16 ATP + 16 H2O = H2 + 8 oxidized [2Fe-2S]-[ferredoxin] + 2 NH4(+) + 16 ADP + 16 phosphate + 6 H(+). Its function is as follows. The key enzymatic reactions in nitrogen fixation are catalyzed by the nitrogenase complex, which has 2 components: the iron protein and the molybdenum-iron protein. The sequence is that of Nitrogenase iron protein from Dehalococcoides mccartyi (strain ATCC BAA-2266 / KCTC 15142 / 195) (Dehalococcoides ethenogenes (strain 195)).